Reading from the N-terminus, the 241-residue chain is Adapter protein MecA (241 aa).

Residues 115-141 (TDSNDKNNDDSSYMSDGNPADLNGYAN) are disordered.

It belongs to the MecA family. Homodimer.

Functionally, enables the recognition and targeting of unfolded and aggregated proteins to the ClpC protease or to other proteins involved in proteolysis. In Pediococcus pentosaceus (strain ATCC 25745 / CCUG 21536 / LMG 10740 / 183-1w), this protein is Adapter protein MecA.